Consider the following 240-residue polypeptide: 2-C-methyl-D-erythritol 2,4-cyclodiphosphate synthase, apicoplast (240 aa).

A divalent metal cation-binding residues include D71 and H73. Residues 71-73 and 115-116 each bind 4-CDP-2-C-methyl-D-erythritol 2-phosphate; these read DIH and HS. Residue H123 participates in a divalent metal cation binding. 4-CDP-2-C-methyl-D-erythritol 2-phosphate is bound by residues 137-139, 142-146, 181-187, and 212-214; these read DIG, FPDKD, AQVPKIS, and GKT.

Belongs to the IspF family. In terms of assembly, homotrimer. A divalent metal cation serves as cofactor.

It localises to the plastid. Its subcellular location is the apicoplast. The catalysed reaction is 4-CDP-2-C-methyl-D-erythritol 2-phosphate = 2-C-methyl-D-erythritol 2,4-cyclic diphosphate + CMP. It functions in the pathway isoprenoid biosynthesis; isopentenyl diphosphate biosynthesis via DXP pathway; isopentenyl diphosphate from 1-deoxy-D-xylulose 5-phosphate: step 4/6. Its function is as follows. In the mevalonate-independent isoprenoid biosynthetic pathway, converts 4-diphosphocytidyl-2C-methyl-D-erythritol 2-phosphate into 2C-methyl-D-erythritol 2,4-cyclodiphosphate and CMP. This is 2-C-methyl-D-erythritol 2,4-cyclodiphosphate synthase, apicoplast from Plasmodium falciparum (isolate 3D7).